The chain runs to 206 residues: FMN-dependent NADH:quinone oxidoreductase (206 aa).

Residues 15-17 (SVS), 94-97 (MYNF), and 138-141 (TRGG) each bind FMN.

Belongs to the azoreductase type 1 family. Homodimer. FMN is required as a cofactor.

It catalyses the reaction 2 a quinone + NADH + H(+) = 2 a 1,4-benzosemiquinone + NAD(+). It carries out the reaction N,N-dimethyl-1,4-phenylenediamine + anthranilate + 2 NAD(+) = 2-(4-dimethylaminophenyl)diazenylbenzoate + 2 NADH + 2 H(+). Quinone reductase that provides resistance to thiol-specific stress caused by electrophilic quinones. In terms of biological role, also exhibits azoreductase activity. Catalyzes the reductive cleavage of the azo bond in aromatic azo compounds to the corresponding amines. This Sinorhizobium medicae (strain WSM419) (Ensifer medicae) protein is FMN-dependent NADH:quinone oxidoreductase.